Reading from the N-terminus, the 605-residue chain is MSNESCLPYYTAHSYSSMSAFKTSMGDLQRQLYNRGEYNIFKYAPMFESNFIQINKKGEVIDVHNRVRMVTVGIVCTSPILPLPDVMVLAQPTKICEQHVRWGRFAKGRGRRPVKTLELTRLLPLKFVKISIHDHEKQQLRLKLATGRTFYLQLCPSSDTREDLFCYWEKLVYLLRPPVESYCSTPTLLSGDAPPEDNKSLVAAELHREGDQSETGLYKPCDVSAATSSAYAGGEGIQHASHGTASAASPSTSTPGAAEGGAARTAGGMAVAGTATGPRTDVAIAGAAMSPATGAMSIATTKSAGPGQVTTALAGAAIKNPGENESSKSMAGAANISSEGISLALVGAASTSLEGTSTSMAGAASLSQDSSLSAAFAGSITTSKCAAERTEGPAVGPLISTLQSEGYMSERDGSQKVSQPSAEVWNENKERREKKDRHPSRKSSHHRKAGESHRRRAGDKNQKASSHRSASGHKNTRDDKKEKGYSNVRGKRHGSSRKSSTHSSTKKESRTTQELGKNQSASSTGALQKKASKISSFLRSLRATPGSKTRVTSHDREVDIVAKMVEKQNIEAKVEKAQGGQELEMISGTMTSEKTEMIVFETKSI.

2 disordered regions span residues 234-265 and 407-529; these read GEGIQHASHGTASAASPSTSTPGAAEGGAART and YMSE…ALQK. Residues 239–265 are compositionally biased toward low complexity; the sequence is HASHGTASAASPSTSTPGAAEGGAART. Residues 434-457 are compositionally biased toward basic residues; sequence KKDRHPSRKSSHHRKAGESHRRRA. Positions 441 to 458 match the Bipartite nuclear localization signal motif; that stretch reads RKSSHHRKAGESHRRRAG. Polar residues predominate over residues 463-473; that stretch reads KASSHRSASGH. The segment covering 475-484 has biased composition (basic and acidic residues); that stretch reads NTRDDKKEKG. Over residues 489–500 the composition is skewed to basic residues; the sequence is RGKRHGSSRKSS. Residues 513–526 are compositionally biased toward polar residues; the sequence is QELGKNQSASSTGA. At S592 the chain carries Phosphoserine.

It belongs to the GARIN family. In terms of assembly, interacts (via N-terminus) with RAB2B (in GTP-bound form). Interacts with FRG1. As to expression, expressed in adult spermatocytes and spermatids (at protein level).

The protein resides in the golgi apparatus. It localises to the nucleus. It is found in the cajal body. May be involved in RNA biogenesis. This is Golgi-associated RAB2 interactor protein 3 from Homo sapiens (Human).